The chain runs to 1405 residues: DNA-directed RNA polymerase subunit beta' (1405 aa).

Zn(2+) is bound by residues Cys-70, Cys-72, Cys-85, and Cys-88. Mg(2+) is bound by residues Asp-460, Asp-462, and Asp-464. 4 residues coordinate Zn(2+): Cys-814, Cys-888, Cys-895, and Cys-898.

The protein belongs to the RNA polymerase beta' chain family. As to quaternary structure, the RNAP catalytic core consists of 2 alpha, 1 beta, 1 beta' and 1 omega subunit. When a sigma factor is associated with the core the holoenzyme is formed, which can initiate transcription. Mg(2+) is required as a cofactor. Requires Zn(2+) as cofactor.

It catalyses the reaction RNA(n) + a ribonucleoside 5'-triphosphate = RNA(n+1) + diphosphate. Functionally, DNA-dependent RNA polymerase catalyzes the transcription of DNA into RNA using the four ribonucleoside triphosphates as substrates. This Shewanella sediminis (strain HAW-EB3) protein is DNA-directed RNA polymerase subunit beta'.